The primary structure comprises 798 residues: Penicillin-binding protein 1A (798 aa).

Topologically, residues 2–9 (IKKILTTC) are cytoplasmic. Residues 10–30 (FGLFFGFCVFGVGLVAIAILV) form a helical; Signal-anchor for type II membrane protein membrane-spanning segment. Over 31-798 (TYPKLPSLDS…SKQQQLDSLF (768 aa)) the chain is Periplasmic. The tract at residues 50 to 218 (LTIYSADGEV…SAYNPIVNPE (169 aa)) is transglycosylase. Residue glutamate 88 is the Proton donor; for transglycosylase activity of the active site. A transpeptidase region spans residues 378 to 700 (RRALGFAARA…GTIAVPVWVD (323 aa)). Serine 461 (acyl-ester intermediate; for transpeptidase activity) is an active-site residue. A disordered region spans residues 739–798 (LMLDNSGIAPQPSRRAKEDDEAAVENEQQGRSDETRQDVQETPVLPSNTDSKQQQLDSLF). The span at 766–777 (QQGRSDETRQDV) shows a compositional bias: basic and acidic residues. Residues 783 to 798 (LPSNTDSKQQQLDSLF) show a composition bias toward polar residues.

The protein in the N-terminal section; belongs to the glycosyltransferase 51 family. In the C-terminal section; belongs to the transpeptidase family.

It localises to the cell inner membrane. It catalyses the reaction [GlcNAc-(1-&gt;4)-Mur2Ac(oyl-L-Ala-gamma-D-Glu-L-Lys-D-Ala-D-Ala)](n)-di-trans,octa-cis-undecaprenyl diphosphate + beta-D-GlcNAc-(1-&gt;4)-Mur2Ac(oyl-L-Ala-gamma-D-Glu-L-Lys-D-Ala-D-Ala)-di-trans,octa-cis-undecaprenyl diphosphate = [GlcNAc-(1-&gt;4)-Mur2Ac(oyl-L-Ala-gamma-D-Glu-L-Lys-D-Ala-D-Ala)](n+1)-di-trans,octa-cis-undecaprenyl diphosphate + di-trans,octa-cis-undecaprenyl diphosphate + H(+). The catalysed reaction is Preferential cleavage: (Ac)2-L-Lys-D-Ala-|-D-Ala. Also transpeptidation of peptidyl-alanyl moieties that are N-acyl substituents of D-alanine.. Its pathway is cell wall biogenesis; peptidoglycan biosynthesis. In terms of biological role, cell wall formation. Synthesis of cross-linked peptidoglycan from the lipid intermediates. The enzyme has a penicillin-insensitive transglycosylase N-terminal domain (formation of linear glycan strands) and a penicillin-sensitive transpeptidase C-terminal domain (cross-linking of the peptide subunits). Essential for cell wall synthesis. The polypeptide is Penicillin-binding protein 1A (mrcA) (Neisseria gonorrhoeae (strain ATCC 700825 / FA 1090)).